The chain runs to 393 residues: S-adenosylmethionine synthase (393 aa).

His17 serves as a coordination point for ATP. Position 19 (Asp19) interacts with Mg(2+). Glu45 provides a ligand contact to K(+). L-methionine contacts are provided by Glu58 and Gln106. Residues 106 to 116 (QSAHIAQGVNA) form a flexible loop region. Residues 171-173 (DAK), 237-238 (KF), Asp246, 252-253 (RK), Ala269, and Lys273 each bind ATP. Asp246 is a binding site for L-methionine. Position 277 (Lys277) interacts with L-methionine.

It belongs to the AdoMet synthase family. In terms of assembly, homotetramer; dimer of dimers. Mg(2+) serves as cofactor. K(+) is required as a cofactor.

The protein resides in the cytoplasm. It catalyses the reaction L-methionine + ATP + H2O = S-adenosyl-L-methionine + phosphate + diphosphate. The protein operates within amino-acid biosynthesis; S-adenosyl-L-methionine biosynthesis; S-adenosyl-L-methionine from L-methionine: step 1/1. In terms of biological role, catalyzes the formation of S-adenosylmethionine (AdoMet) from methionine and ATP. The overall synthetic reaction is composed of two sequential steps, AdoMet formation and the subsequent tripolyphosphate hydrolysis which occurs prior to release of AdoMet from the enzyme. This Ruegeria pomeroyi (strain ATCC 700808 / DSM 15171 / DSS-3) (Silicibacter pomeroyi) protein is S-adenosylmethionine synthase.